The sequence spans 184 residues: Thymidine kinase (184 aa).

ATP is bound by residues 10–17 and 83–86; these read GPMYSGKT and DEVQ. The Proton acceptor role is filled by glutamate 84. The Zn(2+) site is built by cysteine 140, cysteine 143, cysteine 173, and cysteine 176.

It belongs to the thymidine kinase family. As to quaternary structure, homotetramer.

The protein resides in the cytoplasm. It catalyses the reaction thymidine + ATP = dTMP + ADP + H(+). The protein is Thymidine kinase of Thermotoga sp. (strain RQ2).